The primary structure comprises 560 residues: 5'-nucleotidase (560 aa).

The first 21 residues, Met1–Gly21, serve as a signal peptide directing secretion. Cys22 carries N-palmitoyl cysteine lipidation. The S-diacylglycerol cysteine moiety is linked to residue Cys22. The a divalent metal cation site is built by Asp45, His47, Asp88, Asn120, His221, His256, and Gln258. Residues Phe432 and Tyr501 to Asp507 each bind substrate.

Belongs to the 5'-nucleotidase family. It depends on chloride as a cofactor. Mg(2+) serves as cofactor.

The protein localises to the cell outer membrane. It catalyses the reaction a ribonucleoside 5'-phosphate + H2O = a ribonucleoside + phosphate. Its function is as follows. Degradation of extracellular 5'-nucleotides for nutritional needs. The chain is 5'-nucleotidase (nutA) from Vibrio parahaemolyticus serotype O3:K6 (strain RIMD 2210633).